Consider the following 297-residue polypeptide: Sirohydrochlorin cobaltochelatase CbiKP (297 aa).

The signal sequence occupies residues 1 to 28 (MSRHPMVTRLLCLVFSCLIILACSPAFA). His-124 contributes to the heme binding site. His-182 (proton acceptor) is an active-site residue. Residues His-182, Glu-212, and His-244 each coordinate Co(2+).

Belongs to the CbiK family. In terms of assembly, homotetramer; dimer of dimers.

Its subcellular location is the periplasm. The catalysed reaction is Co-sirohydrochlorin + 2 H(+) = sirohydrochlorin + Co(2+). It carries out the reaction siroheme + 2 H(+) = sirohydrochlorin + Fe(2+). Catalyzes the insertion of Co(2+) into sirohydrochlorin. To a lesser extent, is also able to insert Fe(2+) into sirohydrochlorin, yielding siroheme. Its periplasmic location means that it cannot participate in cobalamin biosynthesis and its genomic environment suggests it is likely to be associated with a heme or metal transport system. The protein is Sirohydrochlorin cobaltochelatase CbiKP (cbiKp) of Nitratidesulfovibrio vulgaris (strain ATCC 29579 / DSM 644 / CCUG 34227 / NCIMB 8303 / VKM B-1760 / Hildenborough) (Desulfovibrio vulgaris).